The following is a 200-amino-acid chain: Inner membrane-spanning protein YciB (200 aa).

Transmembrane regions (helical) follow at residues 7–27 (HPLF…FVNA), 32–52 (FAAT…SYVV), 56–76 (IPLM…LTLV), 93–113 (LFAA…AIMF), 126–146 (ILTF…EIIW), and 153–173 (FWVG…AIAQ).

Belongs to the YciB family.

The protein resides in the cell inner membrane. Plays a role in cell envelope biogenesis, maintenance of cell envelope integrity and membrane homeostasis. This chain is Inner membrane-spanning protein YciB, found in Bradyrhizobium sp. (strain ORS 278).